The sequence spans 99 residues: VQRAPNVQVYSRHPAENGKPNFLNCYVSGFHPPQIDIELLKNGVKIENVEQSDLSFNKDWSFYLLVHTEFTPNNKNEYSCRVKHVTLKEPMTVKWDRDY.

One can recognise an Ig-like C1-type domain in the interval 5–92 (PNVQVYSRHP…KHVTLKEPMT (88 aa)). Cys25 and Cys80 are disulfide-bonded.

The protein belongs to the beta-2-microglobulin family. In terms of assembly, heterodimer of an alpha chain and a beta chain. Beta-2-microglobulin is the beta-chain of major histocompatibility complex class I molecules.

The protein resides in the secreted. Its function is as follows. Component of the class I major histocompatibility complex (MHC). Involved in the presentation of peptide antigens to the immune system. The protein is Beta-2-microglobulin (B2M) of Oryctolagus cuniculus (Rabbit).